The sequence spans 197 residues: Xanthine phosphoribosyltransferase (197 aa).

Xanthine contacts are provided by Leu20 and Thr27. 128–132 (ANGQA) serves as a coordination point for 5-phospho-alpha-D-ribose 1-diphosphate. Lys156 provides a ligand contact to xanthine.

Belongs to the purine/pyrimidine phosphoribosyltransferase family. Xpt subfamily. As to quaternary structure, homodimer.

The protein localises to the cytoplasm. It carries out the reaction XMP + diphosphate = xanthine + 5-phospho-alpha-D-ribose 1-diphosphate. It participates in purine metabolism; XMP biosynthesis via salvage pathway; XMP from xanthine: step 1/1. Functionally, converts the preformed base xanthine, a product of nucleic acid breakdown, to xanthosine 5'-monophosphate (XMP), so it can be reused for RNA or DNA synthesis. This is Xanthine phosphoribosyltransferase from Lactococcus lactis subsp. lactis (strain IL1403) (Streptococcus lactis).